The primary structure comprises 189 residues: Testis-expressed protein 22 (189 aa).

Residues 1 to 120 (MDSRQQRPQR…TQSVPTPPLQ (120 aa)) form a disordered region. Residues 14 to 24 (QWQLAQEQRQQ) show a composition bias toward low complexity. Residues 70–87 (IDERRRLALQRMQERTDT) show a composition bias toward basic and acidic residues. Residues 103–114 (QQTETSPSTQSV) show a composition bias toward low complexity.

In terms of tissue distribution, mainly expressed in spermatocytes and spermatids in testis.

The protein resides in the cytoplasm. It is found in the cytoplasmic vesicle. Its subcellular location is the secretory vesicle. The protein localises to the acrosome. In Mus musculus (Mouse), this protein is Testis-expressed protein 22 (Tex22).